Consider the following 350-residue polypeptide: ATPase GET3 (350 aa).

Residue 26 to 33 (KGGVGKTT) participates in ATP binding. Residue Asp-57 is part of the active site. ATP-binding residues include Glu-241 and Asn-268. Zn(2+) contacts are provided by Cys-281 and Cys-284.

The protein belongs to the arsA ATPase family. Homodimer. Component of the Golgi to ER traffic (GET) complex, which is composed of GET1, GET2 and GET3. Within the complex, GET1 and GET2 form a heterotetramer which is stabilized by phosphatidylinositol binding and which binds to the GET3 homodimer. Interacts with the chloride channel protein GEF1.

It localises to the cytoplasm. It is found in the endoplasmic reticulum. Its subcellular location is the golgi apparatus. Functionally, ATPase required for the post-translational delivery of tail-anchored (TA) proteins to the endoplasmic reticulum. Recognizes and selectively binds the transmembrane domain of TA proteins in the cytosol. This complex then targets to the endoplasmic reticulum by membrane-bound receptors GET1 and GET2, where the tail-anchored protein is released for insertion. This process is regulated by ATP binding and hydrolysis. ATP binding drives the homodimer towards the closed dimer state, facilitating recognition of newly synthesized TA membrane proteins. ATP hydrolysis is required for insertion. Subsequently, the homodimer reverts towards the open dimer state, lowering its affinity for the GET1-GET2 receptor, and returning it to the cytosol to initiate a new round of targeting. Cooperates with the HDEL receptor ERD2 to mediate the ATP-dependent retrieval of resident ER proteins that contain a C-terminal H-D-E-L retention signal from the Golgi to the ER. Involved in low-level resistance to the oxyanions arsenite and arsenate, and in heat tolerance. In Candida glabrata (strain ATCC 2001 / BCRC 20586 / JCM 3761 / NBRC 0622 / NRRL Y-65 / CBS 138) (Yeast), this protein is ATPase GET3.